A 431-amino-acid chain; its full sequence is Interleukin-11 receptor subunit alpha (431 aa).

The first 23 residues, 1-23 (MSSSRSGLTRVLVAVATALVSSS), serve as a signal peptide directing secretion. At 24 to 371 (TPCPQAWGPP…DPLEQVAVLA (348 aa)) the chain is on the extracellular side. The region spanning 27–110 (PQAWGPPGVQ…FGGMVTLKLG (84 aa)) is the Ig-like C2-type domain. 3 disulfides stabilise this stretch: C48–C94, C120–C130, and C170–C180. Fibronectin type-III domains are found at residues 112-219 (PPAR…LRPD) and 220-317 (PPQG…TPST). Residue N127 is glycosylated (N-linked (GlcNAc...) asparagine). The segment at 151–170 (KTLPGAESQRESPSTGPWPC) is disordered. N-linked (GlcNAc...) asparagine glycosylation is present at N194. Residues 304–308 (WSAWS) carry the WSXWS motif motif. A disordered region spans residues 310-360 (EAWGTPSTGPLRDEVPDGSRGHEQKLEAAAQEDSPAPPSPSLQPDPRPLDH). Basic and acidic residues predominate over residues 320–335 (LRDEVPDGSRGHEQKL). The span at 344–355 (PAPPSPSLQPDP) shows a compositional bias: pro residues. A helical transmembrane segment spans residues 372-392 (SLGIFSFLGLAVGALALGLWL). Over 393–431 (RLRRSGKDGPQKPGFLAPMIPGDKLPGIPNLQRTPENFS) the chain is Cytoplasmic. A disordered region spans residues 402 to 431 (PQKPGFLAPMIPGDKLPGIPNLQRTPENFS).

Belongs to the type I cytokine receptor family. Type 3 subfamily. As to quaternary structure, on IL11 binding, forms a multimer complex with IL6ST/gp130. In terms of processing, a short soluble form is also released from the membrane by proteolysis. The sIL11RA is formed either by limited proteolysis of membrane-bound receptors, a process referred to as ectodomain shedding, or directly secreted from the cells after alternative mRNA splicing. mIL11RA is cleaved by the proteases ADAM10, ELANE and PRTN3.

Its subcellular location is the membrane. The protein localises to the secreted. Functionally, receptor for interleukin-11 (IL11). The receptor systems for IL6, LIF, OSM, CNTF, IL11 and CT1 can utilize IL6ST for initiating signal transmission. The IL11/IL11RA/IL6ST complex may be involved in the control of proliferation and/or differentiation of skeletogenic progenitor or other mesenchymal cells. Essential for the normal development of craniofacial bones and teeth. Restricts suture fusion and tooth number. In terms of biological role, soluble form of IL11 receptor (sIL11RA) that acts as an agonist of IL11 activity. The IL11:sIL11RA complex binds to IL6ST/gp130 on cell surfaces and induces signaling also on cells that do not express membrane-bound IL11RA in a process called IL11 trans-signaling. The chain is Interleukin-11 receptor subunit alpha from Rattus norvegicus (Rat).